A 372-amino-acid chain; its full sequence is Phospho-2-dehydro-3-deoxyheptonate aldolase, tyrosine-inhibited (372 aa).

The protein belongs to the class-I DAHP synthase family.

The protein resides in the cytoplasm. It is found in the nucleus. The catalysed reaction is D-erythrose 4-phosphate + phosphoenolpyruvate + H2O = 7-phospho-2-dehydro-3-deoxy-D-arabino-heptonate + phosphate. The protein operates within metabolic intermediate biosynthesis; chorismate biosynthesis; chorismate from D-erythrose 4-phosphate and phosphoenolpyruvate: step 1/7. Functionally, stereospecific condensation of phosphoenolpyruvate (PEP) and D-erythrose-4-phosphate (E4P) giving rise to 3-deoxy-D-arabino-heptulosonate-7-phosphate (DAHP). The sequence is that of Phospho-2-dehydro-3-deoxyheptonate aldolase, tyrosine-inhibited (aro4) from Schizosaccharomyces pombe (strain 972 / ATCC 24843) (Fission yeast).